Consider the following 330-residue polypeptide: G-protein coupled bile acid receptor 1 (330 aa).

The Extracellular portion of the chain corresponds to 1 to 19 (MTPNSTGEVPGPIPRGALE). The N-linked (GlcNAc...) asparagine glycan is linked to asparagine 4. Residues 20 to 40 (LSLALASLIIAANLLLALGIA) form a helical membrane-spanning segment. Residues 41-50 (CDRRLRSPPA) are Cytoplasmic-facing. Residues 51–71 (GCFFLSLLLAGLLTGLALPTL) traverse the membrane as a helical segment. Residues 72-85 (PGLWRQSHRGYWSC) lie on the Extracellular side of the membrane. The cysteines at positions 85 and 155 are disulfide-linked. The chain crosses the membrane as a helical span at residues 86–106 (LLVYLAPNFSFLSLLANLLLV). Residues 107–125 (HGERYVAVLRPLQPPGSIR) lie on the Cytoplasmic side of the membrane. The chain crosses the membrane as a helical span at residues 126-146 (LALLLTWTGPLLFASLPALGW). The Extracellular segment spans residues 147-169 (NHWGPEANCSSQTIFPAPYLYLE). Asparagine 154 is a glycosylation site (N-linked (GlcNAc...) asparagine). Residues 170-190 (VYGLLLPAVGAAALLSAHVLL) form a helical membrane-spanning segment. At 191-230 (AAHRQLQDIRRLERAVCRDAPSALARALTWRQARAQAGAT) the chain is on the cytoplasmic side. A helical transmembrane segment spans residues 231-251 (LLFGLCWGPYVATLFLSVLAY). At 252-261 (EQRPPLGPGT) the chain is on the extracellular side. A helical transmembrane segment spans residues 262 to 282 (LLSLLSLGSASAAAVPVAMGL). Over 283-330 (GDHRYTAPWRAAARRWLRGLRGRGSQASPGPSTAYHTSSQSSVDVDLN) the chain is Cytoplasmic. The disordered stretch occupies residues 304–330 (GRGSQASPGPSTAYHTSSQSSVDVDLN). A compositionally biased stretch (polar residues) spans 307–330 (SQASPGPSTAYHTSSQSSVDVDLN).

This sequence belongs to the G-protein coupled receptor 1 family. Expressed at high level in spleen. Expressed at lower level in thymus, heart, lung, liver, kidney, ileum, blood and adherent alveolar macrophage cells.

Its subcellular location is the cell membrane. In terms of biological role, receptor for bile acid. Bile-acid binding induces its internalization, activation of extracellular signal-regulated kinase and intracellular cAMP production. May be involved in the suppression of macrophage functions by bile acids. Involved in bile acid promoted GLP1R secretion. The chain is G-protein coupled bile acid receptor 1 (GPBAR1) from Oryctolagus cuniculus (Rabbit).